The chain runs to 732 residues: Phosphoribosylformylglycinamidine synthase subunit PurL (732 aa).

The active site involves H32. Y35 serves as a coordination point for ATP. Residue E81 coordinates Mg(2+). Substrate-binding positions include 82–85 and R104; that span reads SHNH. The active-site Proton acceptor is the H83. D105 is a Mg(2+) binding site. Q230 is a binding site for substrate. D258 serves as a coordination point for Mg(2+). 302–304 contacts substrate; it reads ESQ. D485 and G522 together coordinate ATP. Mg(2+) is bound at residue N523. S525 is a binding site for substrate.

The protein belongs to the FGAMS family. In terms of assembly, monomer. Part of the FGAM synthase complex composed of 1 PurL, 1 PurQ and 2 PurS subunits.

It is found in the cytoplasm. It carries out the reaction N(2)-formyl-N(1)-(5-phospho-beta-D-ribosyl)glycinamide + L-glutamine + ATP + H2O = 2-formamido-N(1)-(5-O-phospho-beta-D-ribosyl)acetamidine + L-glutamate + ADP + phosphate + H(+). Its pathway is purine metabolism; IMP biosynthesis via de novo pathway; 5-amino-1-(5-phospho-D-ribosyl)imidazole from N(2)-formyl-N(1)-(5-phospho-D-ribosyl)glycinamide: step 1/2. Part of the phosphoribosylformylglycinamidine synthase complex involved in the purines biosynthetic pathway. Catalyzes the ATP-dependent conversion of formylglycinamide ribonucleotide (FGAR) and glutamine to yield formylglycinamidine ribonucleotide (FGAM) and glutamate. The FGAM synthase complex is composed of three subunits. PurQ produces an ammonia molecule by converting glutamine to glutamate. PurL transfers the ammonia molecule to FGAR to form FGAM in an ATP-dependent manner. PurS interacts with PurQ and PurL and is thought to assist in the transfer of the ammonia molecule from PurQ to PurL. The protein is Phosphoribosylformylglycinamidine synthase subunit PurL of Methanococcus aeolicus (strain ATCC BAA-1280 / DSM 17508 / OCM 812 / Nankai-3).